We begin with the raw amino-acid sequence, 317 residues long: Melanocyte-stimulating hormone receptor (317 aa).

Topologically, residues 1 to 37 (MPVQGSQRRLLGSLNSTPTATPHLGLAANQTGARCLE) are extracellular. N-linked (GlcNAc...) asparagine glycosylation occurs at N29. Residues 38–63 (VSVPDGLFLSLGLVSLVENVLVVTAI) traverse the membrane as a helical segment. Over 64–72 (AKNRNLHSP) the chain is Cytoplasmic. The helical transmembrane segment at 73–93 (MYCFICCLALSDLLVSGSNML) threads the bilayer. At 94 to 118 (ETAVTLLLEAGALAARAAVVQQLDN) the chain is on the extracellular side. A helical membrane pass occupies residues 119 to 140 (VIDVITCSSMLSSLCFLGAIAV). Residues 141-163 (DRYISIFYALRYHSIVTLPRARR) lie on the Cytoplasmic side of the membrane. The chain crosses the membrane as a helical span at residues 164-183 (AVAAIWVASVLCSTLFIAYY). At 184 to 191 (DHAAVLLC) the chain is on the extracellular side. Residues 192-211 (LVVFFLAMLVLMAVLYVHML) form a helical membrane-spanning segment. Over 212–240 (ARACQHAQGIARLHKRQRLAHQGFGLKGA) the chain is Cytoplasmic. Residues 241-266 (ATLTILLGIFFLCWGPFFLHLTLIVL) traverse the membrane as a helical segment. Over 267 to 279 (CPQHPTCSCIFKN) the chain is Extracellular. The helical transmembrane segment at 280–300 (FNLFLALIICNAIIDPLIYAF) threads the bilayer. Over 301 to 317 (RSQELRRTLKEVLLCSW) the chain is Cytoplasmic. Residue C315 is the site of S-palmitoyl cysteine attachment.

This sequence belongs to the G-protein coupled receptor 1 family. Interacts with MGRN1, but does not undergo MGRN1-mediated ubiquitination; this interaction competes with GNAS-binding and thus inhibits agonist-induced cAMP production. Interacts with OPN3; the interaction results in a decrease in MC1R-mediated cAMP signaling and ultimately a decrease in melanin production in melanocytes.

It is found in the cell membrane. Receptor for MSH (alpha, beta and gamma) and ACTH. The activity of this receptor is mediated by G proteins which activate adenylate cyclase. Mediates melanogenesis, the production of eumelanin (black/brown) and phaeomelanin (red/yellow), via regulation of cAMP signaling in melanocytes. The chain is Melanocyte-stimulating hormone receptor (MC1R) from Macaca sylvanus (Barbary macaque).